The chain runs to 306 residues: UDP-N-acetylenolpyruvoylglucosamine reductase (306 aa).

Positions 34-198 (VGGPADLLIT…LEVTFKLHNS (165 aa)) constitute an FAD-binding PCMH-type domain. Residue R177 is part of the active site. S227 (proton donor) is an active-site residue. Residue E297 is part of the active site.

It belongs to the MurB family. Requires FAD as cofactor.

Its subcellular location is the cytoplasm. The enzyme catalyses UDP-N-acetyl-alpha-D-muramate + NADP(+) = UDP-N-acetyl-3-O-(1-carboxyvinyl)-alpha-D-glucosamine + NADPH + H(+). The protein operates within cell wall biogenesis; peptidoglycan biosynthesis. In terms of biological role, cell wall formation. This chain is UDP-N-acetylenolpyruvoylglucosamine reductase, found in Clostridium botulinum (strain 657 / Type Ba4).